Reading from the N-terminus, the 193-residue chain is Non-specific lipid transfer protein GPI-anchored 2 (193 aa).

Positions 1–22 are cleaved as a signal peptide; it reads MSNVVVIAVVLIVASLTGHVSA. 4 disulfide bridges follow: C38–C83, C48–C67, C68–C110, and C81–C120. An N-linked (GlcNAc...) asparagine glycan is attached at N44. A disordered region spans residues 143–164; sequence APGSMSGAESPGGFGSGPSASR. A lipid anchor (GPI-anchor amidated glycine) is attached at G165. Residues 166-193 constitute a propeptide, removed in mature form; sequence SDAPSSAPYSLFLNLIIFPLAFAFYIFC.

Belongs to the plant LTP family. In terms of processing, O-glycosylated on hydroxyprolines; noncontiguous hydroxylproline residues are glycosylated with arabinogalactan. As to expression, up-regulated in the epidermis of top stems. Expressed in roots, cotyledons, seedlings, leaves, stems, buds, flower and silique walls. Preferentially expressed in the shoot apical meristem and the root meristem. Also detected in expanding leaves and petals, developing flowers, and elongating pistils, stamens and siliques.

It localises to the cell membrane. Its function is as follows. Lipid transfer protein that, together with LTPG1, binds to lipids and functions as a component of the cuticular lipid export machinery that performs extensive export of intracellular lipids (e.g. C29 alkane) from epidermal cells to the surface to build the cuticular wax layer and silique walls. Contributes to pre-invasive defense against some non-host powdery mildew pathogens by preventing the penetration of the epidermal cell wall by the fungal agents (e.g. Blumeria graminis f. sp. hordei (Bgh)). Involved in seed and ovule maturation and development, probably by regulating the fatty acids homeostasis during suberin and sporopollenin biosynthesis or deposition. The protein is Non-specific lipid transfer protein GPI-anchored 2 of Arabidopsis thaliana (Mouse-ear cress).